Here is a 125-residue protein sequence, read N- to C-terminus: MEMIKFGQDDIENAMADMGDAQIDDLAFGAIQLDETGTILAYNAAEGELTGRSPQDVIGKNFFKDIAPCTDTEEFGGRFREGVANGDLNAMFEYVFDYQMQPTKVKVHMKRAITGDSYWIFVKRV.

Positions 23–86 (IDDLAFGAIQ…GRFREGVANG (64 aa)) constitute a PAS domain. Position 69 is an S-(4-hydroxycinnamyl)cysteine (C69).

Belongs to the photoactive yellow protein family. In terms of processing, the 4-hydroxycinnamic acid (p-coumaric acid) chromophore is covalently bound via a thioester linkage.

Functionally, this photoactive protein is a photoreceptor with kinetics similar to that of rhodopsin. This is Photoactive yellow protein (pyp) from Rhodothalassium salexigens (Rhodospirillum salexigens).